We begin with the raw amino-acid sequence, 581 residues long: MDSLQDTVPLDHGGCCPALSRLVPRGFGTEMWTLFALSGPLFLFQVLTFMIYIVSTVFCGHLGKVELASVTLAVAFVNVCGVSVGVGLSSACDTLMSQSFGSPNKKHVGVILQRGALVLLLCCLPCWALFLNTQHILLLFRQDPEVSRLTQDYVMIFIPGLPVIFLYNLLAKYLQNQKITWPQVLSGVVGNCVNGVANYALVSVLNLGVRGSAYANIISQFAQTVFLLLYIVLKKLHLETWAGWSSQCLQDWGPFFSLAVPSMLMICVEWWAYEIGSFLMGLLSVVDLSAQAVIYEVATVTYMRHSHHLAYTAHVARIPLGLSIGVCVRVGMALGAADTVQAKRSAVSGVLSIVGISLVLGTLISILKNQLGHIFTNDEDVIALVSQVLPVYSVFHVFEAICCVYGGVLRGTGKQAFGAAVNAITYYIIGLPLGILLTFVVRMRIMGLWLGMLACVFLATAAFVAYTARLDWKLAAEEAKKHSGQQQQQQRAESTATRSGPEKAVLSSVATGSSPGITLTTYSRSECHVDLFRTPEEAHTLSAPTSRLSVKQLVIRRGAALGAASATLMVGLTVRILATRH.

Residues 1-33 are Cytoplasmic-facing; it reads MDSLQDTVPLDHGGCCPALSRLVPRGFGTEMWT. A helical transmembrane segment spans residues 34–54; it reads LFALSGPLFLFQVLTFMIYIV. The Extracellular segment spans residues 55–66; it reads STVFCGHLGKVE. The chain crosses the membrane as a helical span at residues 67 to 87; the sequence is LASVTLAVAFVNVCGVSVGVG. Topologically, residues 88–119 are cytoplasmic; it reads LSSACDTLMSQSFGSPNKKHVGVILQRGALVL. The helical transmembrane segment at 120–140 threads the bilayer; sequence LLCCLPCWALFLNTQHILLLF. Residues 141–153 are Extracellular-facing; that stretch reads RQDPEVSRLTQDY. Residues 154-174 traverse the membrane as a helical segment; the sequence is VMIFIPGLPVIFLYNLLAKYL. The Cytoplasmic portion of the chain corresponds to 175–183; it reads QNQKITWPQ. Residues 184–204 traverse the membrane as a helical segment; that stretch reads VLSGVVGNCVNGVANYALVSV. The Extracellular segment spans residues 205–212; that stretch reads LNLGVRGS. A helical membrane pass occupies residues 213–233; the sequence is AYANIISQFAQTVFLLLYIVL. Topologically, residues 234 to 253 are cytoplasmic; that stretch reads KKLHLETWAGWSSQCLQDWG. Residues 254-273 traverse the membrane as a helical segment; it reads PFFSLAVPSMLMICVEWWAY. Residues 274–317 lie on the Extracellular side of the membrane; it reads EIGSFLMGLLSVVDLSAQAVIYEVATVTYMRHSHHLAYTAHVAR. Residues 318–338 form a helical membrane-spanning segment; the sequence is IPLGLSIGVCVRVGMALGAAD. Residues 339-346 are Cytoplasmic-facing; that stretch reads TVQAKRSA. Residues 347–367 form a helical membrane-spanning segment; it reads VSGVLSIVGISLVLGTLISIL. Over 368-380 the chain is Extracellular; sequence KNQLGHIFTNDED. The chain crosses the membrane as a helical span at residues 381–401; that stretch reads VIALVSQVLPVYSVFHVFEAI. Residues 402–420 lie on the Cytoplasmic side of the membrane; that stretch reads CCVYGGVLRGTGKQAFGAA. A helical transmembrane segment spans residues 421 to 441; sequence VNAITYYIIGLPLGILLTFVV. Topologically, residues 442 to 444 are extracellular; it reads RMR. The helical transmembrane segment at 445 to 465 threads the bilayer; sequence IMGLWLGMLACVFLATAAFVA. Over 466–557 the chain is Cytoplasmic; that stretch reads YTARLDWKLA…LSVKQLVIRR (92 aa). The segment at 481 to 513 is disordered; sequence KHSGQQQQQQRAESTATRSGPEKAVLSSVATGS. The helical transmembrane segment at 558–578 threads the bilayer; it reads GAALGAASATLMVGLTVRILA. At 579–581 the chain is on the extracellular side; that stretch reads TRH.

This sequence belongs to the multi antimicrobial extrusion (MATE) (TC 2.A.66.1) family.

It localises to the cell membrane. The protein localises to the apical cell membrane. It catalyses the reaction thiamine(out) + H(+)(in) = thiamine(in) + H(+)(out). The enzyme catalyses estrone 3-sulfate(in) + H(+)(out) = estrone 3-sulfate(out) + H(+)(in). It carries out the reaction creatinine(in) + H(+)(out) = creatinine(out) + H(+)(in). Functionally, multidrug efflux pump that functions as a H(+)/organic cation antiporter. Mediates the efflux of cationic compounds, such as the model cations, tetraethylammonium (TEA) and 1-methyl-4-phenylpyridinium (MPP+), the platinum-based drug oxaliplatin or weak bases that are positively charged at physiological pH, cimetidine or the antidiabetic drug metformin. Mediates the efflux of the endogenous compounds creatinine, thiamine and estrone-3-sulfate. Plays a physiological role in the excretion of drugs, toxins and endogenous metabolites through the kidney. This chain is Multidrug and toxin extrusion protein 2 (SLC47A2), found in Pongo abelii (Sumatran orangutan).